The sequence spans 871 residues: Alanine--tRNA ligase (871 aa).

Zn(2+) is bound by residues His561, His565, Cys662, and His666.

It belongs to the class-II aminoacyl-tRNA synthetase family. Zn(2+) is required as a cofactor.

The protein localises to the cytoplasm. It catalyses the reaction tRNA(Ala) + L-alanine + ATP = L-alanyl-tRNA(Ala) + AMP + diphosphate. Catalyzes the attachment of alanine to tRNA(Ala) in a two-step reaction: alanine is first activated by ATP to form Ala-AMP and then transferred to the acceptor end of tRNA(Ala). Also edits incorrectly charged Ser-tRNA(Ala) and Gly-tRNA(Ala) via its editing domain. In Dechloromonas aromatica (strain RCB), this protein is Alanine--tRNA ligase.